The following is a 356-amino-acid chain: MSADLAMGPELPTSPLALEYVNDFDLMKFEVKKEAMAAHDRANIRQCNRLQPQGSVSSTPISTPCSSVPSSPSFSPTEQKNHLEELYWMPSGAYPQQIDPQTLSLTPEDAVEALIGATAHGHPPPPHVQQQLQAGAFDGYRGAHHHHGHAQQQQQQQPQHHHHQHQYGAIPHHPDDLSGHPGAHGHHPHHHHHHHHSQDPDSPSPTSPEQLHHRHHHHHHPHGHPGQQGHHGVGGGLNVEDRFSDDQLVTMSVRELNRHLRGFTKDEVIRLKQKRRTLKNRGYAQSCRFKRVQQKHLLENEKTQLINQVEQLKQEINRLARERDAYKLKCEKLTGANGFREAGSTSDNPSSPEFFM.

Disordered regions lie at residues 49–79 (RLQPQGSVSSTPISTPCSSVPSSPSFSPTEQ) and 140–240 (YRGA…LNVE). A compositionally biased stretch (low complexity) spans 55–77 (SVSSTPISTPCSSVPSSPSFSPT). Composition is skewed to basic residues over residues 183-196 (AHGHHPHHHHHHHH) and 212-223 (HHRHHHHHHPHG). The segment at 270 to 295 (RLKQKRRTLKNRGYAQSCRFKRVQQK) is basic motif. The bZIP domain maps to 270–333 (RLKQKRRTLK…DAYKLKCEKL (64 aa)). A leucine-zipper region spans residues 298-319 (LENEKTQLINQVEQLKQEINRL).

It belongs to the bZIP family. Maf subfamily. In terms of assembly, homodimer or heterodimer with other bHLH-Zip transcription factors. Binds DNA as a homodimer or a heterodimer.

It localises to the nucleus. May act as a transcriptional activator or repressor. Involved in neurogenesis. Involved in the development of rhombomeres (r) 5 and 6 segments from their common precursor 'proto-segment' in the hindbrain. The sequence is that of Transcription factor MafB (mafb) from Danio rerio (Zebrafish).